The chain runs to 673 residues: UvrABC system protein B (673 aa).

The 389-residue stretch at A26–R414 folds into the Helicase ATP-binding domain. G39–T46 provides a ligand contact to ATP. The short motif at Y92 to I115 is the Beta-hairpin element. A Helicase C-terminal domain is found at Q431–M597. Residues R601–Y626 are disordered. One can recognise a UVR domain in the interval A635 to A670.

Belongs to the UvrB family. Forms a heterotetramer with UvrA during the search for lesions. Interacts with UvrC in an incision complex.

The protein localises to the cytoplasm. Its function is as follows. The UvrABC repair system catalyzes the recognition and processing of DNA lesions. A damage recognition complex composed of 2 UvrA and 2 UvrB subunits scans DNA for abnormalities. Upon binding of the UvrA(2)B(2) complex to a putative damaged site, the DNA wraps around one UvrB monomer. DNA wrap is dependent on ATP binding by UvrB and probably causes local melting of the DNA helix, facilitating insertion of UvrB beta-hairpin between the DNA strands. Then UvrB probes one DNA strand for the presence of a lesion. If a lesion is found the UvrA subunits dissociate and the UvrB-DNA preincision complex is formed. This complex is subsequently bound by UvrC and the second UvrB is released. If no lesion is found, the DNA wraps around the other UvrB subunit that will check the other stand for damage. The chain is UvrABC system protein B from Xanthomonas campestris pv. campestris (strain 8004).